A 152-amino-acid polypeptide reads, in one-letter code: Mitochondrial fission 1 protein (152 aa).

M1 carries the N-acetylmethionine modification. At 1–122 (MEAVLNELVS…LIDKAMKKDG (122 aa)) the chain is on the cytoplasmic side. S10 carries the post-translational modification Phosphoserine. One copy of the TPR repeat lies at 71–104 (RDYVFYLAVGNYRLKEYEKALKYVRGLLQTEPQN). The chain crosses the membrane as a helical span at residues 123–143 (LVGMAIVGGMALGVAGLAGLI). The Mitochondrial intermembrane portion of the chain corresponds to 144–152 (GLAVSKSKS).

This sequence belongs to the FIS1 family. Interacts with DNM1L/DLP1 through the TPR region; may form part of a larger protein complex at the endoplasmic reticulum-mitochondrial interface during mitochondrial fission. Interacts with MARCHF5. Interacts with MIEF1. Interacts with PEX11A, PEX11B and PEX11G. In terms of processing, ubiquitinated by MARCHF5.

It is found in the mitochondrion outer membrane. The protein resides in the peroxisome membrane. Functionally, involved in the fragmentation of the mitochondrial network and its perinuclear clustering. Plays a minor role in the recruitment and association of the fission mediator dynamin-related protein 1 (DNM1L) to the mitochondrial surface and mitochondrial fission. May not be essential for the assembly of functional fission complexes and the subsequent membrane scission event. Also mediates peroxisomal fission. May act when the products of fission are directed toward mitochondrial homeostasis, mitophagy, or apoptosis. Can induce cytochrome c release from the mitochondrion to the cytosol, ultimately leading to apoptosis. The chain is Mitochondrial fission 1 protein (Fis1) from Mus musculus (Mouse).